The chain runs to 24 residues: SGPAQKQNVVNQLLVLIYLYKXDS.

The protein belongs to the tyrosinase family. Hemocyanin subfamily. As to expression, hemolymph.

It localises to the secreted. The protein resides in the extracellular space. Functionally, hemocyanins are copper-containing oxygen carriers occurring freely dissolved in the hemolymph of many mollusks and arthropods. The chain is Hemocyanin subunit 4e from Maja squinado (Mediterranean spider crab).